The chain runs to 188 residues: Large ribosomal subunit protein eL18 (188 aa).

The interval 153 to 188 (GKAPGTPHSHTKPYIRSKGRKFERARGRRASRGYKN) is disordered. Basic residues-rich tracts occupy residues 161 to 171 (SHTKPYIRSKG) and 178 to 188 (RGRRASRGYKN).

This sequence belongs to the eukaryotic ribosomal protein eL18 family. Component of the large ribosomal subunit.

The protein resides in the cytoplasm. It localises to the cytosol. It is found in the rough endoplasmic reticulum. Component of the large ribosomal subunit. The ribosome is a large ribonucleoprotein complex responsible for the synthesis of proteins in the cell. The sequence is that of Large ribosomal subunit protein eL18 (rpl18) from Ictalurus punctatus (Channel catfish).